Reading from the N-terminus, the 456-residue chain is UDP-N-acetylglucosamine 1-carboxyvinyltransferase (456 aa).

34–35 (KN) is a phosphoenolpyruvate binding site. R104 contributes to the UDP-N-acetyl-alpha-D-glucosamine binding site. C128 (proton donor) is an active-site residue. A 2-(S-cysteinyl)pyruvic acid O-phosphothioketal modification is found at C128. 2 residues coordinate UDP-N-acetyl-alpha-D-glucosamine: D319 and I341.

Belongs to the EPSP synthase family. MurA subfamily.

Its subcellular location is the cytoplasm. The catalysed reaction is phosphoenolpyruvate + UDP-N-acetyl-alpha-D-glucosamine = UDP-N-acetyl-3-O-(1-carboxyvinyl)-alpha-D-glucosamine + phosphate. It functions in the pathway cell wall biogenesis; peptidoglycan biosynthesis. Cell wall formation. Adds enolpyruvyl to UDP-N-acetylglucosamine. In Prochlorococcus marinus (strain MIT 9301), this protein is UDP-N-acetylglucosamine 1-carboxyvinyltransferase.